A 169-amino-acid chain; its full sequence is Sorting nexin-24 (169 aa).

Met-1 is modified (N-acetylmethionine). Residues 1 to 125 (MEVYIPSFRY…SFDETESEES (125 aa)) enclose the PX domain. A 1,2-diacyl-sn-glycero-3-phospho-(1D-myo-inositol-3-phosphate) contacts are provided by Arg-38, Ser-40, Lys-61, and Arg-74. Ser-113 and Ser-116 each carry phosphoserine.

Belongs to the sorting nexin family.

Its subcellular location is the cytoplasmic vesicle membrane. May be involved in several stages of intracellular trafficking. The chain is Sorting nexin-24 (SNX24) from Homo sapiens (Human).